The following is a 349-amino-acid chain: Protein disulfide isomerase Creld2 (349 aa).

A signal peptide spans 1–22 (MHLLLAAGFGLLLLLLPPPAAS). A CXXC motif is present at residues 28 to 31 (CQRC). Cystine bridges form between cysteine 28–cysteine 31, cysteine 137–cysteine 151, cysteine 145–cysteine 163, and cysteine 165–cysteine 174. The EGF-like 1 domain occupies 133 to 175 (DCKECQGGSERPCSGNGYCSGDGSRQGDGSCQCHAGYKGPLCI). A glycan (N-linked (GlcNAc...) asparagine) is linked at asparagine 187. One copy of the FU 1 repeat lies at 190 to 237 (HSICLACDESCKTCSGPSNKDCVQCEVGWARVEDACVDVDECAAETPP). An N-linked (GlcNAc...) asparagine glycan is attached at asparagine 248. One copy of the FU 2 repeat lies at 250–297 (SYICEECDSTCVGCTGKGPANCKECIAGYTKQSGQCADIDECSLEEKA). Residues 260–263 (CVGC) carry the CXXC motif. Disulfide bonds link cysteine 260/cysteine 263, cysteine 291/cysteine 305, cysteine 298/cysteine 314, and cysteine 316/cysteine 327. One can recognise an EGF-like 2; calcium-binding domain in the interval 287-328 (DIDECSLEEKACKRRNENCYNVPGSFVCVCPDGFEETEDACV).

The protein belongs to the CRELD family. In terms of assembly, interacts with Chrna4. Component of a complex containing at least Creld2, Manf, Matn3 and Pdia4. Broadly expressed in brain (at protein level).

The protein resides in the endoplasmic reticulum. The catalysed reaction is Catalyzes the rearrangement of -S-S- bonds in proteins.. Functionally, protein disulfide isomerase. Might play a role in the unfolded protein response. May regulate transport of alpha4-beta2 neuronal acetylcholine receptor. The sequence is that of Protein disulfide isomerase Creld2 (Creld2) from Rattus norvegicus (Rat).